The primary structure comprises 1033 residues: Calcium-transporting ATPase 3, plasma membrane-type (1033 aa).

Topologically, residues 1–180 (MHSGVNGCCP…FVWEALEDTT (180 aa)) are cytoplasmic. 2 helical membrane passes run 181–201 (LIILSACAIFSLVVGITTEGW) and 204–224 (GAHDGVGIVASILLVVSVTGT). The Cytoplasmic portion of the chain corresponds to 225-268 (SNYQQSLQFRDLDKEKRKILVQVTRNGLRQRVLIDDLLPGDAVH). Transmembrane regions (helical) follow at residues 269-289 (LAVGDQVPADGLFISGFSVLV) and 362-382 (IGKIGLFFAVLTFIVLSQGII). Residues 383-405 (GQKYLDGLLLSWSGDDVLEILDH) are Cytoplasmic-facing. A helical transmembrane segment spans residues 406–426 (FAVAVTIVVVAVPEGLPLAVT). D461 serves as the catalytic 4-aspartylphosphate intermediate. Mg(2+) contacts are provided by D762 and D766. Residues 823–843 (FQLTVNVVALLVNFTSACFTG) form a helical membrane-spanning segment. Residues 844 to 846 (DAP) lie on the Cytoplasmic side of the membrane. 2 helical membrane passes run 847 to 867 (LTAVQLLWVNMIMDTLGALAL) and 928 to 948 (IVLNTIIFNTFVFCQVFNEIS). Residues 949–965 (SREMEDINVLRGMAGNS) are Cytoplasmic-facing. The next 2 membrane-spanning stretches (helical) occupy residues 966 to 986 (IFLGVLTGTIFFQFILVQFLG) and 999 to 1019 (WLISILFGFLGMPIAAAIKLI). At 1020-1033 (AVEPHEKADTRRTP) the chain is on the cytoplasmic side.

The protein belongs to the cation transport ATPase (P-type) (TC 3.A.3) family. Type IIB subfamily.

The protein resides in the membrane. The catalysed reaction is Ca(2+)(in) + ATP + H2O = Ca(2+)(out) + ADP + phosphate + H(+). Its activity is regulated as follows. Activated by calmodulin. Its function is as follows. This magnesium-dependent enzyme catalyzes the hydrolysis of ATP coupled with the translocation of calcium from the cytosol out of the cell, into the endoplasmic reticulum, or into organelles. The polypeptide is Calcium-transporting ATPase 3, plasma membrane-type (Oryza sativa subsp. japonica (Rice)).